Reading from the N-terminus, the 255-residue chain is Postacrosomal sheath WW domain-binding protein (255 aa).

One can recognise a GRAM domain in the interval 15-87; the sequence is LIPNGESLLK…DLITNLTVEQ (73 aa). 7 repeat units span residues 139–145, 146–152, 153–159, 160–166, 167–173, 174–180, and 202–208. The 6 X 7 AA tandem repeat of Y-G-X-P-P-X-G stretch occupies residues 139-208; the sequence is YGAPPAGYGA…PAGYGAPPLG (70 aa). Positions 171 to 174 match the PPxY motif motif; the sequence is PPGY. Disordered regions lie at residues 180-199 and 204-255; these read GYGA…RASP and APPL…ASSS.

Functionally, may play a role in meiotic resumption and pronuclear formation, mediated by a WW domain-signaling pathway during fertilization. The polypeptide is Postacrosomal sheath WW domain-binding protein (WBP2NL) (Macaca fascicularis (Crab-eating macaque)).